The primary structure comprises 199 residues: Cytochrome b (199 aa).

4 consecutive transmembrane segments (helical) span residues 1–8, 32–53, 68–88, and 133–153; these read LTGLFLAM, WLIR…YFHI, WNIG…GYVL, and FFAF…LHLL. Residues H38 and H52 each coordinate heme b. Heme b is bound by residues H137 and H151. H156 contributes to the a ubiquinone binding site. Residues 181–199 form a helical membrane-spanning segment; that stretch reads YKDLLGFAILLVALASLAH.

It belongs to the cytochrome b family. In terms of assembly, the cytochrome bc1 complex contains 3 respiratory subunits (MT-CYB, CYC1 and UQCRFS1), 2 core proteins (UQCRC1 and UQCRC2) and probably 6 low-molecular weight proteins. It depends on heme b as a cofactor.

It is found in the mitochondrion inner membrane. Functionally, component of the ubiquinol-cytochrome c reductase complex (complex III or cytochrome b-c1 complex) that is part of the mitochondrial respiratory chain. The b-c1 complex mediates electron transfer from ubiquinol to cytochrome c. Contributes to the generation of a proton gradient across the mitochondrial membrane that is then used for ATP synthesis. The polypeptide is Cytochrome b (mt-cyb) (Sarda chiliensis (Pacific bonito)).